The chain runs to 348 residues: Phosphate acyltransferase (348 aa).

Belongs to the PlsX family. Homodimer. Probably interacts with PlsY.

It localises to the cytoplasm. It catalyses the reaction a fatty acyl-[ACP] + phosphate = an acyl phosphate + holo-[ACP]. Its pathway is lipid metabolism; phospholipid metabolism. In terms of biological role, catalyzes the reversible formation of acyl-phosphate (acyl-PO(4)) from acyl-[acyl-carrier-protein] (acyl-ACP). This enzyme utilizes acyl-ACP as fatty acyl donor, but not acyl-CoA. The protein is Phosphate acyltransferase of Rhizobium leguminosarum bv. trifolii (strain WSM2304).